The primary structure comprises 182 residues: MANQVITGIKETAQSITGAARPWGDFLDLSAFSFPSSIADATTRVTQNLTHFRINYSIILSILLGLTLITRPIAILAFIAVGLAWFFLYFAREEPLTIFGFTIDDGIVAVLLIGLSIGSLVTTGVWLRALTTVGFGVLVLILHAALRGTDDLVSDDLESPYGPMLSTSGGGNDGARGDYSGI.

Ala-2 is modified (N-acetylalanine). 3 consecutive transmembrane segments (helical) span residues 68 to 88, 107 to 127, and 129 to 149; these read LITR…WFFL, IVAV…GVWL, and ALTT…LRGT. The segment at 163–182 is disordered; that stretch reads PMLSTSGGGNDGARGDYSGI.

This sequence belongs to the PRA1 family. In terms of assembly, interacts with PRA1F2 and PRA1F3. Interacts with the cauliflower mosaic virus (CaMV) movement protein (via N-terminus). In terms of tissue distribution, expressed in hypocotyls, roots, lateral roots, lateral root caps, columella cells, leaves, shoot apex, stems and flowers.

It localises to the endosome membrane. In terms of biological role, may be involved in both secretory and endocytic intracellular trafficking in the endosomal/prevacuolar compartments. This chain is PRA1 family protein D (PRA1D), found in Arabidopsis thaliana (Mouse-ear cress).